The following is a 179-amino-acid chain: MAIIAKKYAQALYETSLDKDVLDLMYDEFAAVDEAVIPNQDKLKAFDSDPKNIAEDRNSLVESAFKGINEYLKNMLFVMAENRHLSILPEVFKAFEGLYNQYYNQDFATVESVHELSQDELDKVGEALIQRTGLSKLIITNVINKSLIGGIRAKVGTKVFDGSIQNDLAQIERKFIRTK.

The protein belongs to the ATPase delta chain family. As to quaternary structure, F-type ATPases have 2 components, F(1) - the catalytic core - and F(0) - the membrane proton channel. F(1) has five subunits: alpha(3), beta(3), gamma(1), delta(1), epsilon(1). F(0) has three main subunits: a(1), b(2) and c(10-14). The alpha and beta chains form an alternating ring which encloses part of the gamma chain. F(1) is attached to F(0) by a central stalk formed by the gamma and epsilon chains, while a peripheral stalk is formed by the delta and b chains.

It localises to the cell membrane. Its function is as follows. F(1)F(0) ATP synthase produces ATP from ADP in the presence of a proton or sodium gradient. F-type ATPases consist of two structural domains, F(1) containing the extramembraneous catalytic core and F(0) containing the membrane proton channel, linked together by a central stalk and a peripheral stalk. During catalysis, ATP synthesis in the catalytic domain of F(1) is coupled via a rotary mechanism of the central stalk subunits to proton translocation. Functionally, this protein is part of the stalk that links CF(0) to CF(1). It either transmits conformational changes from CF(0) to CF(1) or is implicated in proton conduction. In Staphylococcus carnosus (strain TM300), this protein is ATP synthase subunit delta.